Consider the following 220-residue polypeptide: Gene 32 protein (220 aa).

The tract at residues 184–205 (NSAGGNGNAPGGGGAGAQVSAQ) is disordered. Over residues 187-199 (GGNGNAPGGGGAG) the composition is skewed to gly residues.

The sequence is that of Gene 32 protein (32) from Mycobacterium (Mycobacteriophage L5).